The sequence spans 245 residues: 1-(5-phosphoribosyl)-5-[(5-phosphoribosylamino)methylideneamino] imidazole-4-carboxamide isomerase (245 aa).

Aspartate 7 serves as the catalytic Proton acceptor. Aspartate 129 functions as the Proton donor in the catalytic mechanism.

It belongs to the HisA/HisF family.

The protein resides in the cytoplasm. The enzyme catalyses 1-(5-phospho-beta-D-ribosyl)-5-[(5-phospho-beta-D-ribosylamino)methylideneamino]imidazole-4-carboxamide = 5-[(5-phospho-1-deoxy-D-ribulos-1-ylimino)methylamino]-1-(5-phospho-beta-D-ribosyl)imidazole-4-carboxamide. Its pathway is amino-acid biosynthesis; L-histidine biosynthesis; L-histidine from 5-phospho-alpha-D-ribose 1-diphosphate: step 4/9. The sequence is that of 1-(5-phosphoribosyl)-5-[(5-phosphoribosylamino)methylideneamino] imidazole-4-carboxamide isomerase from Salmonella choleraesuis (strain SC-B67).